The sequence spans 279 residues: Phosphate import ATP-binding protein PstB 1 (279 aa).

In terms of domain architecture, ABC transporter spans 26-274; it reads VMDCKLDKIF…PREQLTSDYI (249 aa). 59-66 serves as a coordination point for ATP; it reads GPSGCGKS.

Belongs to the ABC transporter superfamily. Phosphate importer (TC 3.A.1.7) family. In terms of assembly, the complex is composed of two ATP-binding proteins (PstB), two transmembrane proteins (PstC and PstA) and a solute-binding protein (PstS).

It is found in the cell inner membrane. It carries out the reaction phosphate(out) + ATP + H2O = ADP + 2 phosphate(in) + H(+). Functionally, part of the ABC transporter complex PstSACB involved in phosphate import. Responsible for energy coupling to the transport system. The chain is Phosphate import ATP-binding protein PstB 1 from Pseudomonas putida (strain ATCC 47054 / DSM 6125 / CFBP 8728 / NCIMB 11950 / KT2440).